We begin with the raw amino-acid sequence, 163 residues long: UPF0587 protein CG4646 (163 aa).

The Zn(2+) site is built by Cys33, Cys36, Cys68, and Cys71.

It belongs to the UPF0587 family.

This Drosophila melanogaster (Fruit fly) protein is UPF0587 protein CG4646.